Reading from the N-terminus, the 429-residue chain is Enolase (429 aa).

Glutamine 168 provides a ligand contact to (2R)-2-phosphoglycerate. Residue glutamate 210 is the Proton donor of the active site. Mg(2+) is bound by residues aspartate 247, glutamate 288, and aspartate 315. Residues lysine 340, arginine 369, serine 370, and lysine 391 each coordinate (2R)-2-phosphoglycerate. Lysine 340 serves as the catalytic Proton acceptor.

It belongs to the enolase family. The cofactor is Mg(2+).

The protein localises to the cytoplasm. Its subcellular location is the secreted. It localises to the cell surface. It carries out the reaction (2R)-2-phosphoglycerate = phosphoenolpyruvate + H2O. Its pathway is carbohydrate degradation; glycolysis; pyruvate from D-glyceraldehyde 3-phosphate: step 4/5. Functionally, catalyzes the reversible conversion of 2-phosphoglycerate (2-PG) into phosphoenolpyruvate (PEP). It is essential for the degradation of carbohydrates via glycolysis. This Nostoc punctiforme (strain ATCC 29133 / PCC 73102) protein is Enolase.